Here is a 759-residue protein sequence, read N- to C-terminus: uncharacterized protein (759 aa).

2 disordered regions span residues S269–P328 and L406–A759. Residues A289 to G299 show a composition bias toward basic and acidic residues. Low complexity predominate over residues L406 to G415. Residues A417 to G430 are compositionally biased toward basic and acidic residues. Over residues R431 to R444 the composition is skewed to low complexity. 2 stretches are compositionally biased toward basic and acidic residues: residues P469–H518 and D525–T545. A compositionally biased stretch (pro residues) spans W585 to S599. The span at S659–S680 shows a compositional bias: low complexity. Over residues P681–P690 the composition is skewed to pro residues. Low complexity-rich tracts occupy residues S691–P704 and P728–P746.

This is an uncharacterized protein from Human herpesvirus 6B (strain Z29) (HHV-6 variant B).